The primary structure comprises 345 residues: Anthranilate phosphoribosyltransferase (345 aa).

Residues Gly-84, 87–88 (GD), Thr-92, 94–97 (NIST), 112–120 (KHGNRSVSS), and Ser-124 contribute to the 5-phospho-alpha-D-ribose 1-diphosphate site. Gly-84 contributes to the anthranilate binding site. Ser-96 provides a ligand contact to Mg(2+). Asn-115 contacts anthranilate. Residue Arg-170 participates in anthranilate binding. 2 residues coordinate Mg(2+): Asp-229 and Glu-230.

This sequence belongs to the anthranilate phosphoribosyltransferase family. As to quaternary structure, homodimer. Mg(2+) is required as a cofactor.

The enzyme catalyses N-(5-phospho-beta-D-ribosyl)anthranilate + diphosphate = 5-phospho-alpha-D-ribose 1-diphosphate + anthranilate. It functions in the pathway amino-acid biosynthesis; L-tryptophan biosynthesis; L-tryptophan from chorismate: step 2/5. Its function is as follows. Catalyzes the transfer of the phosphoribosyl group of 5-phosphorylribose-1-pyrophosphate (PRPP) to anthranilate to yield N-(5'-phosphoribosyl)-anthranilate (PRA). The chain is Anthranilate phosphoribosyltransferase from Xanthomonas campestris pv. campestris (strain B100).